Consider the following 327-residue polypeptide: GTPase Obg (327 aa).

The Obg domain occupies M1–I159. Residues A160–S327 form the OBG-type G domain. Residues G166–S173, F191–N195, D212–G215, N279–D282, and S308–L310 contribute to the GTP site. Mg(2+) contacts are provided by S173 and T193.

This sequence belongs to the TRAFAC class OBG-HflX-like GTPase superfamily. OBG GTPase family. As to quaternary structure, monomer. Mg(2+) is required as a cofactor.

The protein localises to the cytoplasm. In terms of biological role, an essential GTPase which binds GTP, GDP and possibly (p)ppGpp with moderate affinity, with high nucleotide exchange rates and a fairly low GTP hydrolysis rate. Plays a role in control of the cell cycle, stress response, ribosome biogenesis and in those bacteria that undergo differentiation, in morphogenesis control. The sequence is that of GTPase Obg from Pelagibacter ubique (strain HTCC1062).